Consider the following 62-residue polypeptide: Lepidopteran-selective toxin (62 aa).

Residues 1–24 (MKFLYGVILIALFLTVMTATLSEA) form the signal peptide. 4 disulfides stabilise this stretch: cysteine 26/cysteine 43, cysteine 29/cysteine 51, cysteine 40/cysteine 56, and cysteine 44/cysteine 58. Residue tyrosine 62 is a propeptide.

It belongs to the short scorpion toxin superfamily. Chloride channel inhibitor family. Expressed by the venom gland.

The protein resides in the secreted. Its function is as follows. Toxin with unknown function in healthy organisms. On glioma cells, interacts with chloride channels (probably ClC-3/CLCN3) and MMP2 at the surface of glioma cells. This complex is then internalized via caveolae, thus inhibiting the chloride channels necessary for cell shrinkage and tumor propagation. Induces flaccid paralysis in H.virescens larvae. Is not toxic to S.falculata larvae or mice. The polypeptide is Lepidopteran-selective toxin (Hottentotta tamulus (Eastern Indian scorpion)).